We begin with the raw amino-acid sequence, 132 residues long: Acetylcholinesterase (132 aa).

N37 carries an N-linked (GlcNAc...) asparagine glycan. A disulfide bridge connects residues C45 and C72.

The protein belongs to the type-B carboxylesterase/lipase family.

It is found in the synapse. The protein localises to the secreted. The protein resides in the cell membrane. The catalysed reaction is acetylcholine + H2O = choline + acetate + H(+). Its function is as follows. Rapidly hydrolyzes choline released into the synapse. The protein is Acetylcholinesterase (ACE-1) of Culex pipiens pipiens (Northern house mosquito).